The following is a 250-amino-acid chain: Hydroxyethylthiazole kinase (250 aa).

Substrate is bound at residue methionine 39. ATP contacts are provided by arginine 114 and threonine 159. Glycine 186 contributes to the substrate binding site.

Belongs to the Thz kinase family. It depends on Mg(2+) as a cofactor.

It carries out the reaction 5-(2-hydroxyethyl)-4-methylthiazole + ATP = 4-methyl-5-(2-phosphooxyethyl)-thiazole + ADP + H(+). It functions in the pathway cofactor biosynthesis; thiamine diphosphate biosynthesis; 4-methyl-5-(2-phosphoethyl)-thiazole from 5-(2-hydroxyethyl)-4-methylthiazole: step 1/1. In terms of biological role, catalyzes the phosphorylation of the hydroxyl group of 4-methyl-5-beta-hydroxyethylthiazole (THZ). The protein is Hydroxyethylthiazole kinase of Lactococcus lactis subsp. lactis (strain IL1403) (Streptococcus lactis).